The chain runs to 513 residues: MLTRVKSAVANFMGGIMAGSSGSEHGGSGCGGSDLPLRFPYGRPEFLGLSQDEVECSADHIARPILILKETRRLPWATGYAEVINAGKSTHNEDQASCEVLTVKKKVGTITSTPNRNSKRRSSLPNGEGLQLKENSESEGISCHYWSLFDGHAGSGAAVVASRLLQHHITQQLQDIVEILKNSAILPPTCLGEEPESTPAHGRTLTRAASLRGGVGAPGSPSTPPTRFFTEKKIPHECLVIGALESAFKEMDLQIERERSAYNISGGCTALIVVCLLGKLYVANAGDSRAIIIRNGEIIPMSSEFTPETERQRLQYLAFMQPHLLGNEFTHLEFPRRVQRKELGKKMLYRDFNMTGWAYKTIEDDDLKFPLIYGEGKKARVMATIGVTRGLGDHDLKVHDSNIYIKPFLSSAPEVRVYDLSKYEHGADDVLILATDGLWDVLSNEEVAEAITQFLPNCDPDDPHRYTLAAQDLVMRARGVLKDRGWRISNDRLGSGDDISVYVIPLIHGNKLS.

A Phosphoserine modification is found at serine 7. In terms of domain architecture, PPM-type phosphatase spans 77 to 506; sequence ATGYAEVINA…DDISVYVIPL (430 aa). Residues 110–133 are disordered; that stretch reads ITSTPNRNSKRRSSLPNGEGLQLK. A Phosphothreonine modification is found at threonine 113. Phosphoserine is present on residues serine 123 and serine 210. The residue at position 212 (arginine 212) is an Omega-N-methylarginine. At serine 220 the chain carries Phosphoserine. Threonine 223 is modified (phosphothreonine). At serine 421 the chain carries Phosphoserine.

This sequence belongs to the PP2C family.

The protein localises to the nucleus. The protein resides in the cytoplasm. It catalyses the reaction O-phospho-L-seryl-[protein] + H2O = L-seryl-[protein] + phosphate. The catalysed reaction is O-phospho-L-threonyl-[protein] + H2O = L-threonyl-[protein] + phosphate. Functionally, dephosphorylates CDKN1B at 'Thr-187', thus removing a signal for proteasomal degradation. This is Protein phosphatase 1H (Ppm1h) from Rattus norvegicus (Rat).